A 728-amino-acid polypeptide reads, in one-letter code: LPS-assembly protein LptD (728 aa).

The N-terminal stretch at 1-21 (MSALPGFTLAALLLNVSLAEA) is a signal peptide.

It belongs to the LptD family. As to quaternary structure, component of the lipopolysaccharide transport and assembly complex. Interacts with LptE and LptA.

The protein resides in the cell outer membrane. Together with LptE, is involved in the assembly of lipopolysaccharide (LPS) at the surface of the outer membrane. This is LPS-assembly protein LptD from Thiobacillus denitrificans (strain ATCC 25259 / T1).